Consider the following 353-residue polypeptide: Polyprenal reductase 2 (353 aa).

6 consecutive transmembrane segments (helical) span residues 11-31 (PLLC…ALPI), 78-98 (FMHF…AIWF), 175-195 (MHIV…LSLA), 234-254 (PLLK…WGSL), 291-308 (YLAE…SGAE), and 313-335 (WFLF…NWYL).

The protein belongs to the steroid 5-alpha reductase family. Polyprenal reductase subfamily.

It is found in the cell membrane. It carries out the reaction a di-trans,poly-cis-dolichal + NADP(+) = a di-trans,poly-cis-polyprenal + NADPH + H(+). The protein operates within protein modification; protein glycosylation. Its function is as follows. Plays a key role in early steps of protein N-linked glycosylation by being involved in the conversion of polyprenol into dolichol. Acts as a polyprenal reductase that mediates the reduction of polyprenal into dolichal in a NADP-dependent mechanism. Dolichols are required for the synthesis of dolichol-linked monosaccharides and the oligosaccharide precursor used for N-glycosylation. In Oryza sativa subsp. japonica (Rice), this protein is Polyprenal reductase 2.